The chain runs to 279 residues: Undecaprenyl-diphosphatase (279 aa).

A run of 8 helical transmembrane segments spans residues 2-22 (LFIE…TEWL), 44-64 (AFME…VIVI), 85-105 (WQLW…AVPL), 113-133 (FNHM…FLWI), 163-183 (VLSI…AIIL), 188-208 (TVAA…YSGL), 225-245 (LLVL…VIKL), and 255-275 (FTVF…YSVF).

Belongs to the UppP family.

The protein resides in the cell membrane. The enzyme catalyses di-trans,octa-cis-undecaprenyl diphosphate + H2O = di-trans,octa-cis-undecaprenyl phosphate + phosphate + H(+). Catalyzes the dephosphorylation of undecaprenyl diphosphate (UPP). Confers resistance to bacitracin. The sequence is that of Undecaprenyl-diphosphatase from Streptococcus equi subsp. equi (strain 4047).